The following is a 660-amino-acid chain: MDEAFGDSLSTDYRWLGHSHFDSHPSAGDSIYFDSLDEDADPSRTARIDRIAELLDGLNDEQISELVNGVNSTTIKENTKKEISNPNDSTRLPLEQIPGSNNLFLDPRHQLGDNSQNAQRHHEPSFNSEKASYTSTPYKNVAPKVIDSPSARHMHSNSPSFPPSQSHTSSYDQSPKGQLRDNISVPNQQDGLDPEVFNQQSKETKKSLQVPPSRNVPPPVTRPNQYNPEPNFSLSSGYPQQHFSQPELQNRNVHLETVPESYPVPPSGYPLTSSTCVSSISQPIQSTDCQKAQENLSNNKQMSSNDQDIDPFKQAITDLPPSFVNIVLEMNATIQSLSNQCQQRDKQIENITKQLLMNQQDYCPTTMSTTVSTPLCPPKRFPKSTKDFKEQKPDTKQVRSATISNDFNLKGNGRYNEKSQIAVPSEIRVQLSTLDAILLQFEHLRKELTQARKEIQILRHTSQNGDQESNESSKNAITTKTTDKGNNKENTMLNDGSTAPAKNDIRNVINTNNLDAKLSDESELMIEKNKSYSTPASSTIPTFHTSQPLTSLNMPDSRFNLAKEKQLYYRLGLQHIDQQCSVETANMLKTVLVQLNIPFAIFPSTIGQVRRQLQQGRRLYQWARNIHYLIYEENMRDGLVSKQCLADMLKKIRELKKRSL.

Disordered regions lie at residues 79–243, 368–396, and 459–503; these read TKKE…QQHF, STTV…PDTK, and RHTS…PAKN. 3 stretches are compositionally biased toward polar residues: residues 125–138, 156–176, and 222–243; these read SFNS…STPY, SNSP…QSPK, and RPNQ…QQHF. Over residues 384–396 the composition is skewed to basic and acidic residues; the sequence is STKDFKEQKPDTK. Composition is skewed to polar residues over residues 459–480 and 488–497; these read RHTS…ITTK and KENTMLNDGS.

Homodimer. Interacts with cdc11, sad1, plo1 and dma1.

The protein resides in the cytoplasm. It is found in the cytoskeleton. The protein localises to the microtubule organizing center. Its subcellular location is the spindle pole body. Functionally, required for activation of the spg1 GTPase signaling cascade which leads to the initiation of septation and the subsequent termination of mitosis. May act as a scaffold at the spindle pole body to which other components of the spg1 signaling cascade attach. In Schizosaccharomyces pombe (strain 972 / ATCC 24843) (Fission yeast), this protein is Septation initiation protein sid4 (sid4).